Consider the following 511-residue polypeptide: Ulvan-active sulfatase (511 aa).

A signal peptide spans 1–34 (MNFKQNIVYKKMAISMKITAIRPIALVISFTLLS). Residue cysteine 35 is the site of N-palmitoyl cysteine attachment. Cysteine 35 carries S-diacylglycerol cysteine lipidation. 2 residues coordinate Ca(2+): aspartate 59 and cysteine 99. The active-site Nucleophile is the cysteine 99. The residue at position 99 (cysteine 99) is a 3-oxoalanine (Cys). Histidine 149 is an active-site residue. Aspartate 305 is a Ca(2+) binding site.

This sequence belongs to the sulfatase family. Ca(2+) serves as cofactor. The conversion to 3-oxoalanine (also known as C-formylglycine, FGly), of a serine or cysteine residue in prokaryotes and of a cysteine residue in eukaryotes, is critical for catalytic activity. This post-translational modification is severely defective in multiple sulfatase deficiency (MSD).

The protein localises to the cell membrane. Its function is as follows. Sulfatase involved in ulvan degradation. Ulvan is the main polysaccharide component of the Ulvales (green seaweed) cell wall. It is composed of disaccharide building blocks comprising 3-sulfated rhamnose (Rha3S) linked to D-glucuronic acid (GlcA), L-iduronic acid (IduA), or D-xylose (Xyl). This Formosa agariphila (strain DSM 15362 / KCTC 12365 / LMG 23005 / KMM 3901 / M-2Alg 35-1) protein is Ulvan-active sulfatase.